Consider the following 179-residue polypeptide: ATP synthase subunit b (179 aa).

Residues 27–47 (TAITFLVMLVVLGKFAWGPIV) form a helical membrane-spanning segment.

It belongs to the ATPase B chain family. F-type ATPases have 2 components, F(1) - the catalytic core - and F(0) - the membrane proton channel. F(1) has five subunits: alpha(3), beta(3), gamma(1), delta(1), epsilon(1). F(0) has three main subunits: a(1), b(2) and c(10-14). The alpha and beta chains form an alternating ring which encloses part of the gamma chain. F(1) is attached to F(0) by a central stalk formed by the gamma and epsilon chains, while a peripheral stalk is formed by the delta and b chains.

It localises to the cell inner membrane. Functionally, f(1)F(0) ATP synthase produces ATP from ADP in the presence of a proton or sodium gradient. F-type ATPases consist of two structural domains, F(1) containing the extramembraneous catalytic core and F(0) containing the membrane proton channel, linked together by a central stalk and a peripheral stalk. During catalysis, ATP synthesis in the catalytic domain of F(1) is coupled via a rotary mechanism of the central stalk subunits to proton translocation. Component of the F(0) channel, it forms part of the peripheral stalk, linking F(1) to F(0). The polypeptide is ATP synthase subunit b (Anaeromyxobacter sp. (strain K)).